The primary structure comprises 899 residues: 1,4-alpha-glucan-branching enzyme 3, chloroplastic/amyloplastic (899 aa).

Residues 1-49 constitute a chloroplast transit peptide; it reads MVSLSNQTRFSFHPNNLVVSEKRRLGISGVNFPRKIKLKITCFAAERPR. Residues 47–67 form a disordered region; sequence RPRQEKQKKKSQSQSTSDAEA. E612 acts as the Proton donor in catalysis.

It belongs to the glycosyl hydrolase 13 family. GlgB subfamily. In terms of assembly, monomer. Mostly expressed in flowers and inflorescence, and, to a lower extent, in seedlings, roots, stems, leaves, siliques and seeds.

Its subcellular location is the plastid. The protein localises to the chloroplast stroma. It localises to the amyloplast. The enzyme catalyses Transfers a segment of a (1-&gt;4)-alpha-D-glucan chain to a primary hydroxy group in a similar glucan chain.. It participates in glycan biosynthesis; starch biosynthesis. In terms of biological role, catalyzes the formation of the alpha-1,6-glucosidic linkages in starch by scission of a 1,4-alpha-linked oligosaccharide from growing alpha-1,4-glucan chains and the subsequent attachment of the oligosaccharide to the alpha-1,6 position. Essential during embryogenesis. In Arabidopsis thaliana (Mouse-ear cress), this protein is 1,4-alpha-glucan-branching enzyme 3, chloroplastic/amyloplastic (SBE3).